An 80-amino-acid chain; its full sequence is MKTSGVFLLLSLALFCFFSGVFGQGAQVDCAEFKDPKVYCTRESNPHCGSDGQTYGNKCAFCKAVMKSGGKINLKHRGKC.

The N-terminal stretch at 1-23 is a signal peptide; it reads MKTSGVFLLLSLALFCFFSGVFG. Residue Gln-24 is modified to Pyrrolidone carboxylic acid. Residues 24-80 form the Kazal-like domain; the sequence is QGAQVDCAEFKDPKVYCTRESNPHCGSDGQTYGNKCAFCKAVMKSGGKINLKHRGKC. Disulfide bonds link Cys-30–Cys-62, Cys-40–Cys-59, and Cys-48–Cys-80.

In terms of tissue distribution, seminal plasma.

It localises to the secreted. Serine protease inhibitor selective for kallikreins. Efficiently inhibits KLK4, KLK5, KLK6, KLK7, KLK12, KLK13 and KLK14. Doesn't inhibit KLK8. Inhibits acrosin, trypsin, and chymotrypsin. The polypeptide is Serine protease inhibitor Kazal-type 6 (SPINK6) (Bos taurus (Bovine)).